The sequence spans 475 residues: MSSNNGDVRLWGARFADGPAEALAKLSASVHFDWRLAPYDIAGSRAHARVLSKAGLLSEDELTRMLAGLDQLEADVADGSFTGTIADEDVHTALERGLLERLGADLGGKLRAGRSRNDQIATLFRMYLRDHARTIGGLIADLQSALVGLAEAHADVAMPGRTHLQHAQPVLFAHHVLAHVQSLSRDAERLRQWDERTAVSPYGSGALAGSSLGLDPQAVAADLGFERGSVANSIDGTASRDFVAEFAFITAMIGVNLSRIAEEVIIWNTKEFSFVTLHDAFSTGSSIMPQKKNPDIAELARGKSGRLIGNLTGLLATLKALPLAYNRDLQEDKEPVFDSCDQLEVLLPAFTGMMATLTVNRERMEELAPAGFSLATDIAEWLVKQGVPFRVAHEVAGACVKECERAGIELDQLTDEQFAEISEHLTPEVRTVLNVRGALASRDGRGGTAPSAVAVQLAEVKEDLAAQHAWATARP.

Belongs to the lyase 1 family. Argininosuccinate lyase subfamily.

Its subcellular location is the cytoplasm. It catalyses the reaction 2-(N(omega)-L-arginino)succinate = fumarate + L-arginine. It functions in the pathway amino-acid biosynthesis; L-arginine biosynthesis; L-arginine from L-ornithine and carbamoyl phosphate: step 3/3. This chain is Argininosuccinate lyase, found in Streptomyces griseus subsp. griseus (strain JCM 4626 / CBS 651.72 / NBRC 13350 / KCC S-0626 / ISP 5235).